Reading from the N-terminus, the 437-residue chain is (S)-6-hydroxynicotine oxidase (437 aa).

Residues serine 16, 35–37, arginine 43, 57–60, valine 231, serine 405, and 413–415 each bind FAD; these read EAR, GGAG, and EYI.

Belongs to the flavin monoamine oxidase family. In terms of assembly, homodimer. FAD is required as a cofactor.

The catalysed reaction is (S)-6-hydroxynicotine + O2 + H2O = 6-hydroxypseudooxynicotine + H2O2. It catalyses the reaction (S)-6-hydroxynicotine + O2 = 6-hydroxy-N-methylmyosmine + H2O2. It functions in the pathway alkaloid degradation; nicotine degradation; 6-hydroxypseudooxynicotine from nicotine (S-isomer route): step 2/2. With respect to regulation, partially inhibited by Co(2+) or Zn(2+) and significantly inhibited by Ag(+), Cu(2+) and Hg(2+). Its function is as follows. Involved in the degradation of L-nicotine. Catalyzes the oxidation of (S)-6-hydroxynicotine (6-hydroxy-L-nicotine) to 6-hydroxypseudooxynicotine. Oxidation of the pyrrolidine ring of (S)-6-hydroxynicotine leads to the formation of the optically inactive 6-hydroxy-N-methylmyosmine, which hydrolyzes spontaneously to 6-hydroxypseudooxynicotine. Acts with absolute stereospecificity on the L-form of 6-hydroxynicotine. Also involved in the degradation of nornicotine, and catalyzes the oxidation of 6-hydroxynornicotine to 6-hydroxymyosmine, which hydrolyzes to 6-hydroxypseudooxynornicotine. In vitro, converts (S)-nicotine into N-methylmyosmine, which spontaneously hydrolyzes spontaneously into pseudooxynicotine, but catalytic efficiency is about 1900-fold higher with (S)-6-hydroxynicotine. This is (S)-6-hydroxynicotine oxidase from Shinella sp. (strain HZN7).